Reading from the N-terminus, the 638-residue chain is Chaperone protein HtpG (638 aa).

Residues 1–346 form an a; substrate-binding region; it reads MSQQETHGFQ…SNDLPLNVSR (346 aa). Residues 347–563 form a b region; it reads EILQDNKVTT…EGEMSTQMIK (217 aa). Residues 564–638 form a c region; the sequence is LMEAAGQAVP…MNEMLLAKLK (75 aa).

Belongs to the heat shock protein 90 family. As to quaternary structure, homodimer.

It localises to the cytoplasm. Molecular chaperone. Has ATPase activity. This Shewanella sediminis (strain HAW-EB3) protein is Chaperone protein HtpG.